The chain runs to 134 residues: UPF0412 protein YaaI (134 aa).

The N-terminal stretch at 1–23 (MRSVLTISAGLLFGLALSSVAHA) is a signal peptide.

Belongs to the UPF0412 family.

This Salmonella agona (strain SL483) protein is UPF0412 protein YaaI.